The sequence spans 270 residues: Phosphate import ATP-binding protein PstB 2 (270 aa).

The ABC transporter domain maps to 25-265 (LQAKDINIYY…PEKKQTEDYI (241 aa)). Residue 57-64 (GPSGCGKS) coordinates ATP.

The protein belongs to the ABC transporter superfamily. Phosphate importer (TC 3.A.1.7) family. The complex is composed of two ATP-binding proteins (PstB), two transmembrane proteins (PstC and PstA) and a solute-binding protein (PstS).

It localises to the cell membrane. It carries out the reaction phosphate(out) + ATP + H2O = ADP + 2 phosphate(in) + H(+). Part of the ABC transporter complex PstSACB involved in phosphate import. Responsible for energy coupling to the transport system. The polypeptide is Phosphate import ATP-binding protein PstB 2 (Shouchella clausii (strain KSM-K16) (Alkalihalobacillus clausii)).